The sequence spans 95 residues: Large ribosomal subunit protein uL23 (95 aa).

This sequence belongs to the universal ribosomal protein uL23 family. In terms of assembly, part of the 50S ribosomal subunit. Contacts protein L29, and trigger factor when it is bound to the ribosome.

In terms of biological role, one of the early assembly proteins it binds 23S rRNA. One of the proteins that surrounds the polypeptide exit tunnel on the outside of the ribosome. Forms the main docking site for trigger factor binding to the ribosome. The sequence is that of Large ribosomal subunit protein uL23 from Geobacillus kaustophilus (strain HTA426).